The chain runs to 547 residues: uncharacterized protein (547 aa).

The interval 1–37 is disordered; sequence MSAASSAIPKRSDPRLLDQKKSAKSTLPKNTPENGVS. A compositionally biased stretch (basic and acidic residues) spans 10–21; sequence KRSDPRLLDQKK. Over residues 24 to 37 the composition is skewed to polar residues; the sequence is KSTLPKNTPENGVS. 2 C3H1-type zinc fingers span residues 41 to 67 and 68 to 95; these read NLQHVPCKFFRNGTCTAGENCPFSHSL and ETERPICKYFLKGNCKFGPKCALSHALP. Residues 132-176 form a disordered region; the sequence is SPSLSSKTMKNPADKANNTTATDVRGNTATSPYFPFSRSPGRHSG. Residues 147–162 are compositionally biased toward polar residues; sequence ANNTTATDVRGNTATS. Phosphoserine is present on Ser343. Tyr344 carries the post-translational modification Phosphotyrosine. Ser353, Ser355, Ser483, Ser489, Ser495, and Ser499 each carry phosphoserine. Position 502 is a phosphothreonine (Thr502). Residues 526-536 are compositionally biased toward polar residues; it reads VANSSPPWNST. The interval 526 to 547 is disordered; sequence VANSSPPWNSTVEEETPFQMDD. Over residues 537–547 the composition is skewed to acidic residues; the sequence is VEEETPFQMDD.

This is an uncharacterized protein from Schizosaccharomyces pombe (strain 972 / ATCC 24843) (Fission yeast).